The following is a 113-amino-acid chain: Meiotically up-regulated gene 98 protein, mitochondrial (113 aa).

It localises to the mitochondrion. Its function is as follows. Has a role in meiosis. The chain is Meiotically up-regulated gene 98 protein, mitochondrial (mug98) from Schizosaccharomyces pombe (strain 972 / ATCC 24843) (Fission yeast).